A 216-amino-acid polypeptide reads, in one-letter code: LexA repressor (216 aa).

A DNA-binding region (H-T-H motif) is located at residues 28–48 (RAEIAAELGFSSANSAEEHLR). Catalysis depends on for autocatalytic cleavage activity residues Ser-134 and Lys-171.

It belongs to the peptidase S24 family. As to quaternary structure, homodimer.

The enzyme catalyses Hydrolysis of Ala-|-Gly bond in repressor LexA.. Functionally, represses a number of genes involved in the response to DNA damage (SOS response), including recA and lexA. In the presence of single-stranded DNA, RecA interacts with LexA causing an autocatalytic cleavage which disrupts the DNA-binding part of LexA, leading to derepression of the SOS regulon and eventually DNA repair. The sequence is that of LexA repressor from Paraburkholderia xenovorans (strain LB400).